Consider the following 716-residue polypeptide: Epidermal growth factor receptor kinase substrate 8-like protein 1 (716 aa).

In terms of domain architecture, PTB spans 35 to 164 (QYHVNHLVTF…LQNYRSGRGE (130 aa)). 5 disordered regions span residues 175–194 (EELR…QRRP), 203–249 (VEPS…GPEL), 404–472 (PGVE…ETES), 528–582 (YNIL…SLDP), and 600–628 (SRLA…PRSE). Ser-182 is subject to Phosphoserine. Thr-187 carries the post-translational modification Phosphothreonine. Over residues 435 to 446 (PWEDPVEKQLQH) the composition is skewed to basic and acidic residues. Residues 453–464 (QSAPQVAVNGQQ) show a composition bias toward polar residues. An SH3 domain is found at 477 to 536 (KARKWVLCNYDFQARNGSELSVKHRDVLEVLDDRRKWWKVRDHQGQEGYVPYNILTPHPG). The span at 553-563 (TPPPPPAPAPA) shows a compositional bias: pro residues. The stretch at 682–713 (VQRALLEDREKVSELEAVMEKQKKKVEGETKT) forms a coiled coil.

It belongs to the EPS8 family. Interacts with ABI1. Part of a complex that contains SOS1, ABI1 and EPS8L2. Associates with F-actin. As to expression, detected in placenta, skin, mammary gland, bone marrow and stomach.

Its subcellular location is the cytoplasm. Its function is as follows. Stimulates guanine exchange activity of SOS1. May play a role in membrane ruffling and remodeling of the actin cytoskeleton. This chain is Epidermal growth factor receptor kinase substrate 8-like protein 1 (Eps8l1), found in Mus musculus (Mouse).